A 1574-amino-acid chain; its full sequence is Multiple epidermal growth factor-like domains protein 6 (1574 aa).

Residues 1–27 form the signal peptide; sequence MPVRAEARAAWRVVALALLLLPAMPAA. An EMI domain is found at 40 to 122; it reads MPHVCAEQKL…QKPGQEGCLS (83 aa). Disulfide bonds link C44/C108, C74/C80, C107/C120, C127/C138, C134/C147, C149/C162, C168/C179, C175/C188, C190/C203, C209/C220, C216/C230, C232/C245, C251/C262, C258/C271, C273/C286, C292/C303, C299/C312, C314/C327, C338/C349, C345/C358, C360/C373, C379/C389, C385/C398, C400/C411, C419/C430, C426/C439, C441/C454, C524/C537, C531/C544, C546/C555, C568/C580, C574/C587, C589/C598, C611/C623, C617/C630, C632/C641, C654/C668, C660/C675, C677/C686, C699/C711, C705/C718, C722/C731, C744/C755, C750/C762, C764/C773, C786/C799, C793/C806, C808/C817, C830/C842, C836/C849, C851/C860, C873/C886, C879/C893, C895/C904, C917/C929, C923/C936, C938/C947, C960/C972, C966/C979, C981/C990, C1003/C1015, C1009/C1022, C1024/C1033, C1046/C1058, C1052/C1065, C1067/C1076, C1089/C1101, C1095/C1108, C1110/C1119, C1132/C1144, C1138/C1151, C1153/C1162, C1175/C1187, C1181/C1194, C1196/C1205, C1218/C1231, C1224/C1238, C1240/C1249, C1262/C1274, C1268/C1281, C1283/C1292, C1305/C1317, C1311/C1324, C1326/C1335, C1348/C1360, C1354/C1367, C1369/C1378, C1391/C1403, C1397/C1410, C1412/C1421, C1434/C1446, C1440/C1453, C1455/C1464, C1477/C1489, C1483/C1496, C1498/C1507, C1520/C1532, C1526/C1539, and C1541/C1550. In terms of domain architecture, EGF-like 1; calcium-binding spans 123–163; it reads DVDECASANGGCEGPCCNTVGGFYCRCPPGYQLQGDGKTCQ. An EGF-like 2; calcium-binding domain is found at 164-204; it reads DVDECRAHNGGCQHRCVNTPGSYLCECKPGFRLHTDGRTCL. EGF-like domains lie at 205–246 and 247–287; these read AISS…RRCV and RRSP…KTCE. In terms of domain architecture, EGF-like 5; calcium-binding spans 288-328; it reads DVDECALGLAQCAHGCLNTQGSFKCVCHAGYELGADGRQCY. EGF-like domains lie at 334–374 and 375–412; these read IVNS…KTCI and DIDDCANSPCCQQACANTPGGYECSCFAGYRLNTDGCG. The EGF-like 8; calcium-binding domain maps to 415–455; the sequence is DVDECASGHGGCEHHCSNLAGSFQCFCEAGYRLDEDRRGCT. 24 EGF-like domains span residues 520–556, 564–599, 607–642, 650–687, 695–732, 740–774, 782–818, 826–861, 869–905, 913–948, 956–991, 999–1034, 1042–1077, 1085–1120, 1128–1163, 1171–1206, 1214–1250, 1258–1293, 1301–1336, 1344–1379, 1387–1422, 1430–1465, 1473–1508, and 1516–1551; these read FGHDCSLTCDDCRNGGTCFPGQDGCDCPEGWTGIICN, FGKNCSSPCTCQNGGTCDPVLGACRCPPGVSGAHCE, YGKHCRKKCHCANRGRCHRLYGACLCDPGLYGRFCH, FGPGCSEDCLCEQSHTRSCNPKDGSCSCKAGFQGERCQ, FGPGCRHRCTCQPGVACDPVSGECRTQCPPGYQGEDCG, FGVNCSGSCSCVGAPCHRVTGECLCPPGKTGEDCG, WGLGCQEICPACEHGASCNPETGTCLCLPGFVGSRCQ, YGTGCQIRCACANDGHCDPTTGRCSCAPGWTGLSCQ, WGPDCIHPCNCSAGHGNCDAVSGLCLCEAGYEGPRCE, YGPSCEQKCRCEHGAACDHVSGACTCPAGWRGSFCE, FGLDCDSACNCSAGAPCDAVTGSCICPAGRWGPRCA, FGLNCSQICTCFNGASCDSVTGQCHCAPGWMGPTCL, YGKNCQHSCLCRNGGRCDPILGQCTCPEGWTGLACE, YAAGCQLNCSCLHGGICDRLTGHCLCPAGWTGDKCQ, FGVHCEEHCACRKGASCHHVTGACFCPPGWRGPHCE, FGEACAQRCLCPTNASCHHVTGECRCPPGFTGLSCE, FGKDCEHLCQCPGETWACDPASGVCTCAAGYHGTGCL, YGPGCEHICKCLNGGTCDPATGACYCPAGFLGADCS, FGPSCAHVCACRQGAACDPVSGACICSPGKTGVRCE, FGKGCELKCACRNGGLCHATNGSCSCPLGWMGPHCE, YGAACLLECFCQNNGSCEPTTGACLCGPGFYGQACE, HGPGCQRVCECQQGAPCDPVSGQCLCPAGFHGQFCE, FGDGCLQQCNCHTGVPCDPISGLCLCPPGRTGAACD, and FGPGCALRCDCGGGADCDPISGQCHCVDSYMGPTCR. Residues 1555–1568 are compositionally biased toward polar residues; it reads TQISSSRPAPQHPS. A disordered region spans residues 1555-1574; that stretch reads TQISSSRPAPQHPSSRAMKH.

As to expression, expressed in lung.

The protein resides in the secreted. The sequence is that of Multiple epidermal growth factor-like domains protein 6 (Megf6) from Rattus norvegicus (Rat).